The following is a 270-amino-acid chain: MEYIKKIALYMSVLLLIIFIGGCGNMKDEQKKEEQTNKTDSKEEQIKKSFAKTLDMYPIKNLEDLYDKEGYRDGEFKKGDKGTWTILTGFSKSNKPGVLDDEGMVLYLNRNTKKATGYYFVNKVYDDISKNHNEKKYRVELKNNKIVLLDNVEDKKLKQKIENFKFFSQYADFKDLKNYQDGNITTNENVPSYEAQYKMNNSDKNVKKLREIYPITTNNSPNLKLYIDGDIKGSSVGYKKIEYKFSKDKGQETTLRDYLNFGPSEGENVE.

The N-terminal stretch at 1-22 is a signal peptide; it reads MEYIKKIALYMSVLLLIIFIGG. C23 carries N-palmitoyl cysteine lipidation. The S-diacylglycerol cysteine moiety is linked to residue C23.

This sequence belongs to the staphylococcal tandem lipoprotein family.

It is found in the cell membrane. This is an uncharacterized protein from Staphylococcus aureus (strain NCTC 8325 / PS 47).